A 54-amino-acid polypeptide reads, in one-letter code: Phorbol-12-myristate-13-acetate-induced protein 1 (54 aa).

A BH3 motif is present at residues 29–37 (LRRFGDKLN). Residues 41-50 (KLLNLISKLF) form a required for mitochondrial location region.

The protein belongs to the PMAIP1 family. As to quaternary structure, interacts with MCL1. Interacts with BCL2A1. Interacts with BAX. Interacts with BCL2L10. Highly expressed in adult T-cell leukemia cell line.

The protein localises to the mitochondrion. Functionally, promotes activation of caspases and apoptosis. Promotes mitochondrial membrane changes and efflux of apoptogenic proteins from the mitochondria. Contributes to p53/TP53-dependent apoptosis after radiation exposure. Promotes proteasomal degradation of MCL1. Competes with BAK1 for binding to MCL1 and can displace BAK1 from its binding site on MCL1. Competes with BIM/BCL2L11 for binding to MCL1 and can displace BIM/BCL2L11 from its binding site on MCL1. This Homo sapiens (Human) protein is Phorbol-12-myristate-13-acetate-induced protein 1 (PMAIP1).